Here is a 335-residue protein sequence, read N- to C-terminus: Glyceraldehyde-3-phosphate dehydrogenase (335 aa).

Residues Arg-11–Ile-12, Asp-33, and Lys-78 contribute to the NAD(+) site. D-glyceraldehyde 3-phosphate is bound by residues Ser-148 to Thr-150, Thr-179, Thr-208 to Gly-209, and Arg-231. NAD(+) is bound at residue Asn-313.

The protein belongs to the glyceraldehyde-3-phosphate dehydrogenase family. In terms of assembly, homotetramer.

It is found in the cytoplasm. It carries out the reaction D-glyceraldehyde 3-phosphate + phosphate + NAD(+) = (2R)-3-phospho-glyceroyl phosphate + NADH + H(+). Its pathway is carbohydrate degradation; glycolysis; pyruvate from D-glyceraldehyde 3-phosphate: step 1/5. This is Glyceraldehyde-3-phosphate dehydrogenase (GPD) from Pleurotus sajor-caju (Oyster mushroom).